A 177-amino-acid polypeptide reads, in one-letter code: MTKESLEKATFAGGCFWCMVKPFDTQPGIEKVISGYTGGHTVNPTYKEVCSGTTGHTEAIQITFDPAVFPYEKLVEVYWQQTDPTDAAGQFVDRGDSYRPVIFYHNEEQKEIAEKSKAALDASGRFKKPIVTEIAKAETFYPAEEYHQDFYKKEKAHYEGYQVASGRAAFIDANWKG.

Residue C15 is part of the active site.

The protein belongs to the MsrA Met sulfoxide reductase family.

The enzyme catalyses L-methionyl-[protein] + [thioredoxin]-disulfide + H2O = L-methionyl-(S)-S-oxide-[protein] + [thioredoxin]-dithiol. It catalyses the reaction [thioredoxin]-disulfide + L-methionine + H2O = L-methionine (S)-S-oxide + [thioredoxin]-dithiol. In terms of biological role, has an important function as a repair enzyme for proteins that have been inactivated by oxidation. Catalyzes the reversible oxidation-reduction of methionine sulfoxide in proteins to methionine. The sequence is that of Peptide methionine sulfoxide reductase MsrA from Listeria monocytogenes serotype 4b (strain CLIP80459).